The sequence spans 122 residues: MTCTLKSPPKMASFFLSSLVLMFIAALILLPQGLAAYKLTPTYKPPDSELPPYRNFVPPFALNPVYNAPIYKTPNSPPIYNPPIYEAPPTYKPSKKRLPPPFQKLPPFYKQAPPSQKLPRVN.

Residues 1 to 36 (MTCTLKSPPKMASFFLSSLVLMFIAALILLPQGLAA) form the signal peptide. 10 repeat units span residues 45 to 49 (PPDSE), 51 to 55 (PPYRN), 58 to 62 (PPFAL), 68 to 72 (APIYK), 77 to 81 (PPIYN), 82 to 86 (PPIYE), 88 to 92 (PPTYK), 99 to 103 (PPPFQ), 106 to 110 (PPFYK), and 113 to 117 (PPSQK). The interval 45–117 (PPDSELPPYR…FYKQAPPSQK (73 aa)) is 10 X 5 AA approximate repeats of P-P-X-X-X. A disordered region spans residues 90-122 (TYKPSKKRLPPPFQKLPPFYKQAPPSQKLPRVN).

In terms of tissue distribution, root nodules. In early nodules, expressed only in the interior of the developing nodule with no expression in other nodule tissues, including meristem. In slightly older nodules, expressed in almost all cells of the central zone. In more mature nodules, expression is restricted to the invasion zone.

In Medicago sativa (Alfalfa), this protein is Early nodulin-10 (ENOD10).